The following is a 602-amino-acid chain: Transcription termination factor Rho (602 aa).

2 disordered regions span residues 1 to 35 (MTDT…EPAG) and 76 to 216 (ANGA…AEAE). The span at 85-96 (SAQEHDKGDRPP) shows a compositional bias: basic and acidic residues. Residues 100–120 (APATQGEQTPTEQIDSQSQQV) are compositionally biased toward polar residues. The span at 172–182 (GDQQASGGQQA) shows a compositional bias: low complexity. Residues 183-192 (RGDEDGEARQ) are compositionally biased toward basic and acidic residues. Positions 193–206 (GRRGRRFRDRRRRG) are enriched in basic residues. A Rho RNA-BD domain is found at 223–301 (VQPVAGILDV…VRLDSINGGS (79 aa)). Residues 344 to 349 (GKGQRA), 356 to 361 (KAGKTT), and arginine 387 contribute to the ATP site.

The protein belongs to the Rho family. Homohexamer. The homohexamer assembles into an open ring structure.

Its function is as follows. Facilitates transcription termination by a mechanism that involves Rho binding to the nascent RNA, activation of Rho's RNA-dependent ATPase activity, and release of the mRNA from the DNA template. The polypeptide is Transcription termination factor Rho (Mycobacterium bovis (strain ATCC BAA-935 / AF2122/97)).